Reading from the N-terminus, the 589-residue chain is MRTHYSSDVNEKLQNQKVTICGWVHRRRDHGGVIFLDIRDRTGLVQLVFNPESKAFKVADSLRGEYVIKATGTVNLRPEGQENKNLASGKVEIIGEDLEIVNKSKTIPFQLDDFQSTGEDVKLKYRYIDLRRPEMQNKLITRSKAIRYVRNFLDNNGFLDIETPFLTKATPEGARDYLVPSRNFNGKFYALPQSPQLFKQLLMVSGFDRYYQVVKCFRDEDLRADRQPEFTQIDIEASFIDEAFIMSTMEKMIAGLFDATIGVKFDTPFQVMTYAEAMDKYGSDKPDLRIPLEFVNIKEDMKNEEFKVFSGPANDPEARVVAMRVPGGNDKLSRKKIDEYTKFVGIYGARGLAYIKINSLSEGKEGLQSPIVKNISEETLFKVIEKTGAQVGDVLFFGAAKAKIVNDSMGALRAKIGEDFEIFTKDWAPLWVVDFPMFEKDDNRLYAVHHPFTAPKVDTVEELTKDPENLLSRAYDMVINGYEVGGGSIRIHRQDMQAKVFNLLGISDEEAREKFGFMLDALSYGTPIHGGIAFGVDRLIMLLTNTTNIRDVIAFPKTQTASCLMTEAPSNVSLEQLNELGIAVKKEDK.

An L-aspartate-binding site is contributed by Glu-172. The aspartate stretch occupies residues 196–199 (QLFK). Arg-218 is a binding site for L-aspartate. Residues 218–220 (RDE) and Gln-227 each bind ATP. Residue His-449 coordinates L-aspartate. Glu-483 is a binding site for ATP. Residue Arg-490 coordinates L-aspartate. Residue 535–538 (GVDR) coordinates ATP.

This sequence belongs to the class-II aminoacyl-tRNA synthetase family. Type 1 subfamily. As to quaternary structure, homodimer.

It localises to the cytoplasm. The catalysed reaction is tRNA(Asx) + L-aspartate + ATP = L-aspartyl-tRNA(Asx) + AMP + diphosphate. Functionally, aspartyl-tRNA synthetase with relaxed tRNA specificity since it is able to aspartylate not only its cognate tRNA(Asp) but also tRNA(Asn). Reaction proceeds in two steps: L-aspartate is first activated by ATP to form Asp-AMP and then transferred to the acceptor end of tRNA(Asp/Asn). This chain is Aspartate--tRNA(Asp/Asn) ligase, found in Francisella philomiragia subsp. philomiragia (strain ATCC 25017 / CCUG 19701 / FSC 153 / O#319-036).